Here is a 431-residue protein sequence, read N- to C-terminus: Serine hydroxymethyltransferase (431 aa).

(6S)-5,6,7,8-tetrahydrofolate-binding positions include L126 and 130–132; that span reads GHL. An N6-(pyridoxal phosphate)lysine modification is found at K235.

The protein belongs to the SHMT family. In terms of assembly, homodimer. Requires pyridoxal 5'-phosphate as cofactor.

It localises to the cytoplasm. The enzyme catalyses (6R)-5,10-methylene-5,6,7,8-tetrahydrofolate + glycine + H2O = (6S)-5,6,7,8-tetrahydrofolate + L-serine. It participates in one-carbon metabolism; tetrahydrofolate interconversion. It functions in the pathway amino-acid biosynthesis; glycine biosynthesis; glycine from L-serine: step 1/1. Its function is as follows. Catalyzes the reversible interconversion of serine and glycine with tetrahydrofolate (THF) serving as the one-carbon carrier. This reaction serves as the major source of one-carbon groups required for the biosynthesis of purines, thymidylate, methionine, and other important biomolecules. Also exhibits THF-independent aldolase activity toward beta-hydroxyamino acids, producing glycine and aldehydes, via a retro-aldol mechanism. The chain is Serine hydroxymethyltransferase from Nocardia farcinica (strain IFM 10152).